A 491-amino-acid polypeptide reads, in one-letter code: MSNDPIDVVLIGGGIMSATLGAMIQRVQPGWSIRIYESLGEVAQESSNPWNNAGTGHAALCELNYMPEAEDGTVDPAKAISINEQFQLSRQFWASLVAAGDLPEPQTFINSTPHMTFVRGRENVRYLRRRYEELKDQPLFAGMEYSEDAETIAEWAPLLTKKRNRKQRIAATRQLAGTDVDFGALTRALVDDLVASGAELALNHRVCSLKRTKDGLWRIRARHEVGRTPREALARFVFVGAGGGALHLLQKSGISEIEGFGGFPISGQFLRTTNPAIVAQHKAKVYGKAAVGAPPMSVPHLDTRVVDGETSLLFGPYAGFSPKFLKTGTWWDLPGSIRLGNIGPMLAVARDNFDLMKYLIGELMAGREKKLAALREFMPTAKSEDWELIAAGQRVQVMKKDERKGGVLQFGTEVIAAADGSIAGLLGASPGASTAVPIMVDLLKRCFPERFEGWLPVLRELIPTVGTTLNDRPEEAEFVLKRTAAVLKLAQ.

Belongs to the MQO family. FAD serves as cofactor.

It carries out the reaction (S)-malate + a quinone = a quinol + oxaloacetate. Its pathway is carbohydrate metabolism; tricarboxylic acid cycle; oxaloacetate from (S)-malate (quinone route): step 1/1. The sequence is that of Probable malate:quinone oxidoreductase from Leifsonia xyli subsp. xyli (strain CTCB07).